The primary structure comprises 439 residues: Methylenetetrahydrofolate--tRNA-(uracil-5-)-methyltransferase TrmFO (439 aa).

9–14 is an FAD binding site; it reads GAGLAG.

Belongs to the MnmG family. TrmFO subfamily. FAD serves as cofactor.

It is found in the cytoplasm. The enzyme catalyses uridine(54) in tRNA + (6R)-5,10-methylene-5,6,7,8-tetrahydrofolate + NADH + H(+) = 5-methyluridine(54) in tRNA + (6S)-5,6,7,8-tetrahydrofolate + NAD(+). It carries out the reaction uridine(54) in tRNA + (6R)-5,10-methylene-5,6,7,8-tetrahydrofolate + NADPH + H(+) = 5-methyluridine(54) in tRNA + (6S)-5,6,7,8-tetrahydrofolate + NADP(+). Functionally, catalyzes the folate-dependent formation of 5-methyl-uridine at position 54 (M-5-U54) in all tRNAs. In Lactobacillus delbrueckii subsp. bulgaricus (strain ATCC BAA-365 / Lb-18), this protein is Methylenetetrahydrofolate--tRNA-(uracil-5-)-methyltransferase TrmFO.